The chain runs to 22 residues: Mu-conotoxin CnIIIA (22 aa).

3 disulfide bridges follow: Cys3–Cys15, Cys4–Cys21, and Cys10–Cys22. A Cysteine amide modification is found at Cys22.

Belongs to the conotoxin M superfamily. In terms of tissue distribution, expressed by the venom duct. Has not been isolated from the crude venom.

The protein localises to the secreted. In terms of biological role, mu-conotoxins block voltage-gated sodium channels (Nav). This synthetic toxin moderately blocks rNav1.1/SCN1A, rNav1.2/SCN2A, rNav1.3/SCN3A, rNav1.4/SCN4A, rNav1.5/SCN5A, and mNav1.6/SCN8A. This block is very slowly reversible. Causes seizures when injected intracranially into mice. This chain is Mu-conotoxin CnIIIA, found in Conus consors (Singed cone).